A 408-amino-acid chain; its full sequence is Type II methyltransferase M.VspI (408 aa).

Belongs to the N(4)/N(6)-methyltransferase family.

It carries out the reaction a 2'-deoxyadenosine in DNA + S-adenosyl-L-methionine = an N(6)-methyl-2'-deoxyadenosine in DNA + S-adenosyl-L-homocysteine + H(+). In terms of biological role, a gamma subtype methylase, recognizes the double-stranded sequence 5'-ATTAAT-3', methylates A-5 on both strands, and protects the DNA from cleavage by the VspI endonuclease. The polypeptide is Type II methyltransferase M.VspI (Vibrio sp. (strain 343)).